The primary structure comprises 329 residues: Cathepsin K (329 aa).

Residues Met1–Ala15 form the signal peptide. The propeptide at Leu16–Arg114 is activation peptide. Asn103 carries an N-linked (GlcNAc...) asparagine glycan. Disulfide bonds link Cys136–Cys177 and Cys170–Cys210. Residue Cys139 is part of the active site. Asn213 is a glycosylation site (N-linked (GlcNAc...) asparagine). A disulfide bond links Cys269 and Cys318. Residues His276 and Asn296 contribute to the active site.

It belongs to the peptidase C1 family.

The protein resides in the lysosome. It is found in the secreted. It localises to the apical cell membrane. The catalysed reaction is Broad proteolytic activity. With small-molecule substrates and inhibitors, the major determinant of specificity is P2, which is preferably Leu, Met &gt; Phe, and not Arg.. Its function is as follows. Thiol protease involved in osteoclastic bone resorption and may participate partially in the disorder of bone remodeling. Displays potent endoprotease activity against fibrinogen at acid pH. May play an important role in extracellular matrix degradation. Involved in the release of thyroid hormone thyroxine (T4) by limited proteolysis of TG/thyroglobulin in the thyroid follicle lumen. This Rattus norvegicus (Rat) protein is Cathepsin K (Ctsk).